The chain runs to 191 residues: Inosine triphosphate pyrophosphatase (191 aa).

15 to 20 (TGNTNK) serves as a coordination point for ITP. Residue Glu43 participates in Mg(2+) binding. ITP is bound by residues Lys55, 71–72 (DT), Lys88, 147–150 (FGWD), Lys168, and 173–174 (HR).

The protein belongs to the HAM1 NTPase family. As to quaternary structure, homodimer. Mg(2+) serves as cofactor. The cofactor is Mn(2+).

It is found in the cytoplasm. Its subcellular location is the nucleus. The enzyme catalyses ITP + H2O = IMP + diphosphate + H(+). It catalyses the reaction dITP + H2O = dIMP + diphosphate + H(+). The catalysed reaction is XTP + H2O = XMP + diphosphate + H(+). Its function is as follows. Pyrophosphatase that hydrolyzes non-canonical purine nucleotides such as inosine triphosphate (ITP), deoxyinosine triphosphate (dITP) or xanthosine 5'-triphosphate (XTP) to their respective monophosphate derivatives. The enzyme does not distinguish between the deoxy- and ribose forms. Probably excludes non-canonical purines from RNA and DNA precursor pools, thus preventing their incorporation into RNA and DNA and avoiding chromosomal lesions. The sequence is that of Inosine triphosphate pyrophosphatase from Chaetomium globosum (strain ATCC 6205 / CBS 148.51 / DSM 1962 / NBRC 6347 / NRRL 1970) (Soil fungus).